Reading from the N-terminus, the 257-residue chain is Triosephosphate isomerase (257 aa).

Substrate is bound at residue 9–11; sequence NWK. H95 serves as the catalytic Electrophile. Residue E168 is the Proton acceptor of the active site. Substrate-binding positions include G174, S213, and 234–235; that span reads GG.

It belongs to the triosephosphate isomerase family. In terms of assembly, homodimer.

Its subcellular location is the cytoplasm. The enzyme catalyses D-glyceraldehyde 3-phosphate = dihydroxyacetone phosphate. It participates in carbohydrate biosynthesis; gluconeogenesis. Its pathway is carbohydrate degradation; glycolysis; D-glyceraldehyde 3-phosphate from glycerone phosphate: step 1/1. Its function is as follows. Involved in the gluconeogenesis. Catalyzes stereospecifically the conversion of dihydroxyacetone phosphate (DHAP) to D-glyceraldehyde-3-phosphate (G3P). The sequence is that of Triosephosphate isomerase from Acidithiobacillus ferrooxidans (strain ATCC 23270 / DSM 14882 / CIP 104768 / NCIMB 8455) (Ferrobacillus ferrooxidans (strain ATCC 23270)).